The sequence spans 188 residues: Large ribosomal subunit protein uL6 (188 aa).

It belongs to the universal ribosomal protein uL6 family. In terms of assembly, part of the 50S ribosomal subunit.

In terms of biological role, this protein binds to the 23S rRNA, and is important in its secondary structure. It is located near the subunit interface in the base of the L7/L12 stalk, and near the tRNA binding site of the peptidyltransferase center. This is Large ribosomal subunit protein uL6 from Myxococcus xanthus (strain DK1622).